The sequence spans 509 residues: Circadian clock oscillator protein KaiC (509 aa).

KaiC domains follow at residues 1-243 (MKDK…IIVF) and 257-509 (IRIS…IEKN). Residues Gly-45, Thr-46, Gly-47, Lys-48, Thr-49, Ser-85, Lys-220, Leu-221, Arg-222, Thr-224, His-226, Asp-237, Thr-286, Gly-287, Thr-288, Gly-289, Lys-290, and Thr-291 each coordinate ATP. Thr-49 is a binding site for Mg(2+). Residues Thr-291 and Glu-314 each contribute to the Mg(2+) site. ATP is bound at residue Trp-327. Ser-427 is modified (phosphoserine; by autocatalysis). Thr-428 is modified (phosphothreonine; by autocatalysis). 7 residues coordinate ATP: Arg-447, Lys-453, Met-454, Arg-455, Ser-457, His-459, and Lys-461.

It belongs to the KaiC family. As to quaternary structure, homohexamer; hexamerization is dependent on ATP-binding. Component of the KaiBC complex. KaiC interacts with SasA, activating its autokinase function and leading to RpaA activation. Mg(2+) is required as a cofactor. Post-translationally, phosphorylated on serine and threonine residues by autocatalysis. Has a 4 step phosphorylation cycle; the autokinase acts first on Thr-428, then Ser-427. When Ser-427 is modified KaiC switches to an autophosphatase mode, acting first on phospho-Thr-428 then phospho-Ser-427.

It carries out the reaction L-seryl-[protein] + ATP = O-phospho-L-seryl-[protein] + ADP + H(+). It catalyses the reaction L-threonyl-[protein] + ATP = O-phospho-L-threonyl-[protein] + ADP + H(+). The enzyme catalyses ATP + H2O = ADP + phosphate + H(+). Functionally, central component of the KaiBC oscillator complex, which constitutes the main circadian regulator in cyanobacteria. Its composition changes during the circadian cycle to control KaiC phosphorylation. Autophosphorylates and has a weak ATPase activity; ATPase activity defines the circadian period. This is Circadian clock oscillator protein KaiC from Prochlorococcus marinus subsp. pastoris (strain CCMP1986 / NIES-2087 / MED4).